A 444-amino-acid chain; its full sequence is Methylenetetrahydrofolate--tRNA-(uracil-5-)-methyltransferase TrmFO (444 aa).

10 to 15 is a binding site for FAD; sequence GAGLAG.

Belongs to the MnmG family. TrmFO subfamily. Requires FAD as cofactor.

It is found in the cytoplasm. It catalyses the reaction uridine(54) in tRNA + (6R)-5,10-methylene-5,6,7,8-tetrahydrofolate + NADH + H(+) = 5-methyluridine(54) in tRNA + (6S)-5,6,7,8-tetrahydrofolate + NAD(+). It carries out the reaction uridine(54) in tRNA + (6R)-5,10-methylene-5,6,7,8-tetrahydrofolate + NADPH + H(+) = 5-methyluridine(54) in tRNA + (6S)-5,6,7,8-tetrahydrofolate + NADP(+). Functionally, catalyzes the folate-dependent formation of 5-methyl-uridine at position 54 (M-5-U54) in all tRNAs. The chain is Methylenetetrahydrofolate--tRNA-(uracil-5-)-methyltransferase TrmFO from Streptococcus equi subsp. zooepidemicus (strain H70).